Consider the following 169-residue polypeptide: S-ribosylhomocysteine lyase (169 aa).

Fe cation is bound by residues His54, His58, and Cys128.

It belongs to the LuxS family. As to quaternary structure, homodimer. It depends on Fe cation as a cofactor.

It carries out the reaction S-(5-deoxy-D-ribos-5-yl)-L-homocysteine = (S)-4,5-dihydroxypentane-2,3-dione + L-homocysteine. Involved in the synthesis of autoinducer 2 (AI-2) which is secreted by bacteria and is used to communicate both the cell density and the metabolic potential of the environment. The regulation of gene expression in response to changes in cell density is called quorum sensing. Catalyzes the transformation of S-ribosylhomocysteine (RHC) to homocysteine (HC) and 4,5-dihydroxy-2,3-pentadione (DPD). This Shewanella oneidensis (strain ATCC 700550 / JCM 31522 / CIP 106686 / LMG 19005 / NCIMB 14063 / MR-1) protein is S-ribosylhomocysteine lyase.